Consider the following 299-residue polypeptide: Pyridoxal 5'-phosphate synthase subunit PdxS (299 aa).

D24 contacts D-ribose 5-phosphate. The active-site Schiff-base intermediate with D-ribose 5-phosphate is K81. G153 contributes to the D-ribose 5-phosphate binding site. R165 contacts D-glyceraldehyde 3-phosphate. Residues G219 and 240–241 contribute to the D-ribose 5-phosphate site; that span reads GS.

It belongs to the PdxS/SNZ family. As to quaternary structure, in the presence of PdxT, forms a dodecamer of heterodimers.

The catalysed reaction is aldehydo-D-ribose 5-phosphate + D-glyceraldehyde 3-phosphate + L-glutamine = pyridoxal 5'-phosphate + L-glutamate + phosphate + 3 H2O + H(+). The protein operates within cofactor biosynthesis; pyridoxal 5'-phosphate biosynthesis. In terms of biological role, catalyzes the formation of pyridoxal 5'-phosphate from ribose 5-phosphate (RBP), glyceraldehyde 3-phosphate (G3P) and ammonia. The ammonia is provided by the PdxT subunit. Can also use ribulose 5-phosphate and dihydroxyacetone phosphate as substrates, resulting from enzyme-catalyzed isomerization of RBP and G3P, respectively. The sequence is that of Pyridoxal 5'-phosphate synthase subunit PdxS from Methanococcus maripaludis (strain C5 / ATCC BAA-1333).